A 915-amino-acid polypeptide reads, in one-letter code: DNA (cytosine-5)-methyltransferase 3 (915 aa).

Positions 1-14 (MAPSSPSSARPTRA) are enriched in low complexity. Disordered stretches follow at residues 1–107 (MAPS…AEEQ) and 152–171 (HSNWPKRYERSTAANKPEED). Basic and acidic residues predominate over residues 21-30 (AMAEEIHQNQ). Residues 42 to 57 (AKRRRKAASSGKKPKP) show a composition bias toward basic residues. Residues 71-80 (KKGETEKTEP) show a composition bias toward basic and acidic residues. Acidic residues predominate over residues 81–107 (VVDDVCAEEPDEEELAMGEEEAEAEEQ). Residues 188 to 313 (IVYCLGDDVY…VAYSTFANIS (126 aa)) enclose the BAH domain. Over residues 315–328 (ENGQSGSETASGIS) the composition is skewed to polar residues. The interval 315–338 (ENGQSGSETASGISSDDAGLETSS) is disordered. The 532-residue stretch at 345–876 (ATLLDLYSGC…YCLGQAYLGE (532 aa)) folds into the SAM-dependent MTase C5-type domain. Positions 445–508 (FVVQKLIGIR…EGRKRKILPL (64 aa)) constitute a Chromo domain. The active site involves Cys521.

It belongs to the class I-like SAM-binding methyltransferase superfamily. C5-methyltransferase family.

It localises to the nucleus. The catalysed reaction is a 2'-deoxycytidine in DNA + S-adenosyl-L-methionine = a 5-methyl-2'-deoxycytidine in DNA + S-adenosyl-L-homocysteine + H(+). Its function is as follows. May be involved in the CpXpG methylation and in gene silencing. The sequence is that of DNA (cytosine-5)-methyltransferase 3 (DMT105) from Zea mays (Maize).